A 90-amino-acid polypeptide reads, in one-letter code: Protein LURE 1.4 (90 aa).

The first 19 residues, 1–19 (MKCPSIFLTLLIFVSSCTS), serve as a signal peptide directing secretion. An N-linked (GlcNAc...) asparagine glycan is attached at Asn23. Intrachain disulfides connect Cys58-Cys75, Cys61-Cys82, and Cys65-Cys84. The interval 67-87 (RRGKYIRTCSFERKLCRCSIS) is PRK6 binding.

The protein belongs to the DEFL family. In terms of assembly, binds to PRK6 LRRs. As to expression, expressed in the pistil. Detected exclusively in the synergid cells.

The protein localises to the secreted. Pollen tube attractants guiding pollen tubes to the ovular micropyle. The sequence is that of Protein LURE 1.4 from Arabidopsis thaliana (Mouse-ear cress).